The primary structure comprises 344 residues: GTP 3',8-cyclase (344 aa).

A Radical SAM core domain is found at 19 to 244 (PFGRTISYLR…MDLAESTGGP (226 aa)). Position 28 (R28) interacts with GTP. [4Fe-4S] cluster is bound by residues C35 and C39. Residue Y41 coordinates S-adenosyl-L-methionine. A [4Fe-4S] cluster-binding site is contributed by C42. R77 contributes to the GTP binding site. An S-adenosyl-L-methionine-binding site is contributed by G81. T111 is a binding site for GTP. S135 contributes to the S-adenosyl-L-methionine binding site. GTP is bound at residue K171. M205 serves as a coordination point for S-adenosyl-L-methionine. [4Fe-4S] cluster-binding residues include C268 and C271. 273–275 (RVR) is a binding site for GTP. C285 lines the [4Fe-4S] cluster pocket.

Belongs to the radical SAM superfamily. MoaA family. In terms of assembly, monomer and homodimer. Requires [4Fe-4S] cluster as cofactor.

The enzyme catalyses GTP + AH2 + S-adenosyl-L-methionine = (8S)-3',8-cyclo-7,8-dihydroguanosine 5'-triphosphate + 5'-deoxyadenosine + L-methionine + A + H(+). Its pathway is cofactor biosynthesis; molybdopterin biosynthesis. Catalyzes the cyclization of GTP to (8S)-3',8-cyclo-7,8-dihydroguanosine 5'-triphosphate. The polypeptide is GTP 3',8-cyclase (Bradyrhizobium diazoefficiens (strain JCM 10833 / BCRC 13528 / IAM 13628 / NBRC 14792 / USDA 110)).